We begin with the raw amino-acid sequence, 261 residues long: UPF0328 protein ECU03_1620 (261 aa).

It belongs to the UPF0328 family.

This Encephalitozoon cuniculi (strain GB-M1) (Microsporidian parasite) protein is UPF0328 protein ECU03_1620.